A 278-amino-acid chain; its full sequence is MTMESYKTLEIIRKNTDSSVFHLIINRPSHLNALSLDFFIEFPKALSSLDQNPDVSVIILSGAGKHFCSGIDLNSLSSISTQSSSGNDRGRSSEQLRRKIKSMQAAITAIEQCRKPVIAAIHGACIGGGVDLITACDIRYCSEDAFFSIKEVDLAIVADLGTLQRLPSIVGYANAMELALTARRFSGSEAKDLGLVSKVFGSKSELDNGVTTIAEGIGGKSPLAVTGTKAVLLRSREVSVEQGLDYVATWNSAMLISDDLNEAVSAQMMKRKPRFAKL.

Met1 is subject to N-acetylmethionine. Substrate-binding positions include 69-73 and Gly128; that span reads SGIDL. The Microbody targeting signal signature appears at 276–278; the sequence is AKL.

The protein belongs to the enoyl-CoA hydratase/isomerase family. Expressed in roots, leaves, stems and flowers.

It is found in the peroxisome. It carries out the reaction a (3E,5Z)-dienoyl-CoA = a (2E,4E)-(5,6-saturated)-dienoyl-CoA. The protein operates within lipid metabolism; fatty acid beta-oxidation. Converts 3,5-dienoyl-CoAs to the corresponding 2,4-dienoyl-CoAs. Involved in degradation of unsaturated fatty acids. In Arabidopsis thaliana (Mouse-ear cress), this protein is Delta(3,5)-Delta(2,4)-dienoyl-CoA isomerase, peroxisomal.